A 153-amino-acid chain; its full sequence is MDNINTTIDICGAASGLPSPGDSNSKRLRHRKYLPQRWKCEPRGPARTETQRPQTLFWRPWLLKSHKPKTQAHPYARGLRENPQEQKPVEYNHPVRLFWPKSKLLDNTYQEAADLLRNFPVQATISLYNDSESDTDNEEDSSEEEQDSGFESE.

Positions 58-61 match the WRPW motif; required for transcriptional repression and interaction with tle4 motif; it reads WRPW. The segment at 93–128 is ripply homology domain; the sequence is HPVRLFWPKSKLLDNTYQEAADLLRNFPVQATISLY. The interval 127–153 is disordered; it reads LYNDSESDTDNEEDSSEEEQDSGFESE. Positions 131-153 are enriched in acidic residues; it reads SESDTDNEEDSSEEEQDSGFESE.

This sequence belongs to the ripply family. In terms of assembly, interacts with tle4 and tbx6, and mediates interaction between these proteins. As to expression, expressed in the presomitic mesoderm (PSM) in the anterior halves of somitomeres S-I, S-II and S-III.

It localises to the nucleus. Functionally, required during somitogenesis for the formation of somite boundaries. Represses the expression of genes involved in somite segmentation by acting with the corepressor tle4 to down-regulate the transcriptional activity of tbx6. May act by regulating the activity of tle4. Represses transcription of delta2, thy1 and ripply2.2/bowline itself. The chain is Protein ripply2.2 (ripply2.2) from Xenopus laevis (African clawed frog).